The sequence spans 328 residues: L-lactate dehydrogenase (328 aa).

Residues Val-18, Glu-39, Lys-46, Tyr-71, and 85–86 (GA) each bind NAD(+). Gln-88 and Arg-94 together coordinate substrate. Residues Ser-107, 124-126 (AAN), and Ser-149 contribute to the NAD(+) site. 126 to 129 (NPVD) contributes to the substrate binding site. 154-157 (DSAR) contacts substrate. Residues Arg-159 and His-174 each coordinate beta-D-fructose 1,6-bisphosphate. His-181 serves as the catalytic Proton acceptor. Tyr-226 carries the post-translational modification Phosphotyrosine. A substrate-binding site is contributed by Thr-235.

It belongs to the LDH/MDH superfamily. LDH family. As to quaternary structure, homotetramer.

The protein localises to the cytoplasm. The enzyme catalyses (S)-lactate + NAD(+) = pyruvate + NADH + H(+). Its pathway is fermentation; pyruvate fermentation to lactate; (S)-lactate from pyruvate: step 1/1. Allosterically activated by fructose 1,6-bisphosphate (FBP). Functionally, catalyzes the conversion of lactate to pyruvate. The sequence is that of L-lactate dehydrogenase from Streptococcus pneumoniae (strain 70585).